A 230-amino-acid polypeptide reads, in one-letter code: Ribose-5-phosphate isomerase A (230 aa).

Substrate is bound by residues 31–34 (TGST), 88–91 (DGSD), and 101–104 (KGGG). The Proton acceptor role is filled by E110. K128 contributes to the substrate binding site.

This sequence belongs to the ribose 5-phosphate isomerase family. As to quaternary structure, homodimer.

It carries out the reaction aldehydo-D-ribose 5-phosphate = D-ribulose 5-phosphate. It participates in carbohydrate degradation; pentose phosphate pathway; D-ribose 5-phosphate from D-ribulose 5-phosphate (non-oxidative stage): step 1/1. Its function is as follows. Catalyzes the reversible conversion of ribose-5-phosphate to ribulose 5-phosphate. This chain is Ribose-5-phosphate isomerase A, found in Lactobacillus acidophilus (strain ATCC 700396 / NCK56 / N2 / NCFM).